A 126-amino-acid polypeptide reads, in one-letter code: Glycine cleavage system H protein (126 aa).

Residues 22 to 104 (KAYIGITSFA…YEQAWMIVVE (83 aa)) enclose the Lipoyl-binding domain. Position 63 is an N6-lipoyllysine (K63).

The protein belongs to the GcvH family. In terms of assembly, the glycine cleavage system is composed of four proteins: P, T, L and H. It depends on (R)-lipoate as a cofactor.

In terms of biological role, the glycine cleavage system catalyzes the degradation of glycine. The H protein shuttles the methylamine group of glycine from the P protein to the T protein. Is also involved in protein lipoylation via its role as an octanoyl/lipoyl carrier protein intermediate. This Brevibacillus brevis (strain 47 / JCM 6285 / NBRC 100599) protein is Glycine cleavage system H protein.